Reading from the N-terminus, the 796-residue chain is Protein translocase subunit SecA 2 (796 aa).

ATP contacts are provided by residues Gln84, 102–106 (GEGKT), and Asp496.

It belongs to the SecA family. Monomer and homodimer. Part of the essential Sec protein translocation apparatus which comprises SecA, SecYEG and auxiliary proteins SecDF. Other proteins may also be involved.

The protein localises to the cell membrane. It is found in the cytoplasm. The catalysed reaction is ATP + H2O + cellular proteinSide 1 = ADP + phosphate + cellular proteinSide 2.. Part of the Sec protein translocase complex. Interacts with the SecYEG preprotein conducting channel. Has a central role in coupling the hydrolysis of ATP to the transfer of proteins into and across the cell membrane, serving as an ATP-driven molecular motor driving the stepwise translocation of polypeptide chains across the membrane. This chain is Protein translocase subunit SecA 2, found in Staphylococcus epidermidis (strain ATCC 12228 / FDA PCI 1200).